Reading from the N-terminus, the 376-residue chain is N-acetyldiaminopimelate deacetylase (376 aa).

Residue Asp69 is part of the active site. The active-site Proton acceptor is the Glu128.

It belongs to the peptidase M20A family. N-acetyldiaminopimelate deacetylase subfamily.

It carries out the reaction N-acetyl-(2S,6S)-2,6-diaminopimelate + H2O = (2S,6S)-2,6-diaminopimelate + acetate. It participates in amino-acid biosynthesis; L-lysine biosynthesis via DAP pathway; LL-2,6-diaminopimelate from (S)-tetrahydrodipicolinate (acetylase route): step 3/3. In terms of biological role, catalyzes the conversion of N-acetyl-diaminopimelate to diaminopimelate and acetate. The protein is N-acetyldiaminopimelate deacetylase of Bacillus anthracis (strain A0248).